Consider the following 1349-residue polypeptide: MVEHDKSGSKRQELRSNMRNLITLNKGKFKPTASTAEGDEDDLSFTLLDSVFDTLSDSITCVLGSTDIGAIEVQQFMKDGSRNVLASFNIQTFDDKLLSFVHFADINQLVFVFEQGDIITATYDPVSLDPAETLIEIMGTIDNGIAAAQWSYDEETLAMVTKDRNVVVLSKLFEPISEYHLEVDDLKISKHVTVGWGKKETQFRGKGARAMEREALASLKASGLVGNQLRDPTMPYMVDTGDVTALDSHEITISWRGDCDYFAVSSVEEVPDEDDETKSIKRRAFRVFSREGQLDSASEPVTGMEHQLSWKPQGSLIASIQRKTDLGEEDSVDVIFFERNGLRHGEFDTRLPLDEKVESVCWNSNSEALAVVLANRIQLWTSKNYHWYLKQELYASDISYVKWHPEKDFTLMFSDAGFINIVDFAYKMAQGPTLEPFDNGTSLVVDGRTVNITPLALANVPPPMYYRDFETPGNVLDVACSFSNEIYAAINKDVLIFAAVPSIEEMKKGKHPSIVCEFPKSEFTSEVDSLRQVAFINDSIVGVLLDTDNLSRIALLDIQDITQPTLITIVEVYDKIVLLRSDFDYNHLVYETRDGTVCQLDAEGQLMEITKFPQLVRDFRVKRVHNTSAEDDDNWSAESSELVAFGITNNGKLFANQVLLASAVTSLEITDSFLLFTTAQHNLQFVHLNSTDFKPLPLVEEGVEDERVRAIERGSILVSVIPSKSSVVLQATRGNLETIYPRIMVLAEVRKNIMAKRYKEAFIVCRTHRINLDILHDYAPELFIENLEVFINQIGRVDYLNLFISCLSEDDVTKTKYKETLYSGISKSFGMEPAPLTEMQIYMKKKMFDPKTSKVNKICDAVLNVLLSNPEYKKKYLQTIITAYASQNPQNLSAALKLISELENSEEKDSCVTYLCFLQDVNVVYKSALSLYDVSLALLVAQKSQMDPREYLPFLQELQDNEPLRRKFLIDDYLGNYEKALEHLSEIDKDGNVSEEVIDYVESHDLYKHGLALYRYDSEKQNVIYNIYAKHLSSNQMYTDAAVAYEMLGKLKEAMGAYQSAKRWREAMSIAVQKFPEEVESVAEELISSLTFEHRYVDAADIQLEYLDNVKEAVALYCKAYRYDIASLVAIKAKKDELLEEVVDPGLGEGFGIIAELLADCKGQINSQLRRLRELRAKKEENPYAFYGQETEQADDVSVAPSETSTQESFFTRYTGKTGGTAKTGASRRTAKNKRREERKRARGKKGTIYEEEYLVQSVGRLIERLNQTKPDAVRVVEGLCRRNMREQAHQIQKNFVEVLDLLKANVKEIYSISEKDRERVNENGEVYYIPEIPVPEIHDFPKSHIVDF.

Phosphoserine occurs at positions 529, 539, 551, 636, and 828. Positions Q919–F1349 are mediates dimerization. A phosphoserine; by HRR25 mark is found at S1198 and S1202. Residues S1205 and S1209 each carry the phosphoserine modification. Residues Y1214–R1228 show a composition bias toward low complexity. The disordered stretch occupies residues Y1214–K1245. Residues R1228–K1246 are required for binding to tRNA.

It belongs to the ELP1/IKA1 family. As to quaternary structure, homodimer; dimerization promotes ELP1/IKI3 stability and elongator complex formation. Component of the elongator complex which consists of ELP1/IKI3, ELP2, ELP3, ELP4, ELP5/IKI1 and ELP6. The elongator complex is composed of two copies of the Elp123 subcomplex (composed of ELP1/IKI3, ELP2 and ELP3) and two copies of the Elp456 subcomplex (composed of ELP4, ELP5/IKI1 and ELP6). The Elp123 subcomplex forms a two-lobed scaffold, which binds the Elp456 subcomplex asymmetrically. In the complex, ELP1/IKI3 interacts with ELP2. In each lobe, ELP2 is tightly sandwiched between ELP1/IKI3 and ELP3. The Elp123 subcomplex binds tRNA through ELP1/IKI3 and ELP3 and can bind 2 tRNAs simultaneously. tRNA-binding induces conformational rearrangements which precisely position the targeted anticodon base in the active site. The Elp456 subcomplex binds tRNA and has ATPase activity. ELP1/IKI3 interacts with HRR25 and KTI12. Interacts with KTI11/DPH3. Post-translationally, phosphorylation promotes the tRNA modification function of the elongator complex.

The protein resides in the cytoplasm. It is found in the nucleus. It participates in tRNA modification; 5-methoxycarbonylmethyl-2-thiouridine-tRNA biosynthesis. Functionally, component of the elongator complex which is required for multiple tRNA modifications, including mcm5U (5-methoxycarbonylmethyl uridine), mcm5s2U (5-methoxycarbonylmethyl-2-thiouridine), and ncm5U (5-carbamoylmethyl uridine). The elongator complex catalyzes formation of carboxymethyluridine in the wobble base at position 34 in tRNAs. Functions as a gamma-toxin target (TOT); disruption of the complex confers resistance to Kluyveromyces lactis toxin zymocin (pGKL1 killer toxin). May also be involved in sensitivity to Pichia inositovora toxin. ELP1/IKI3 binds to tRNA, mediating interaction of the elongator complex with tRNA. Independently, may be involved in polarized exocytosis. This chain is Elongator complex protein 1 (IKI3), found in Saccharomyces cerevisiae (strain ATCC 204508 / S288c) (Baker's yeast).